Reading from the N-terminus, the 116-residue chain is MGNAMLAEPRTLTKAELAELLFERVGLNKREAKDIVDTFFEEIREALARGDSVKLSGFGNFQVRDKPPRPGRNPKTGETIPIAARRVVTFHASQKLKSTVEQSGNPAEVSDDEAAE.

Disordered stretches follow at residues 58–80 (FGNFQVRDKPPRPGRNPKTGETI) and 94–116 (QKLKSTVEQSGNPAEVSDDEAAE). Residues 94-105 (QKLKSTVEQSGN) show a composition bias toward polar residues.

Belongs to the bacterial histone-like protein family. In terms of assembly, heterodimer of an alpha and a beta chain.

Functionally, this protein is one of the two subunits of integration host factor, a specific DNA-binding protein that functions in genetic recombination as well as in transcriptional and translational control. The protein is Integration host factor subunit alpha of Bordetella avium (strain 197N).